A 473-amino-acid chain; its full sequence is MNKQGNQMSFLRTIILVSTFGGLLFGYDTGVLNGALPYMGEPDQLNLNAFTEGLVTSSLLFGAALGAVFGGRMSDFNGRRKNILFLAVIFFISTIGCTFAPNVTVMIISRFVLGIAVGGASVTVPAYLAEMSPVESRGRMVTQNELMIVSGQLLAFVFNAILGTTMGDNSHVWRFMLVIASLPALFLFFGMIRMPESPRWLVSKGRKEDALRVLKKIRDEKRAAAELQEIEFAFKKEDQLEKATFKDLSVPWVRRIVFIGLGIAIVQQITGVNSIMYYGTEILRNSGFQTEAALIGNIANGVISVLATFVGIWLLGRVGRRPMLMTGLIGTTTALLLIGIFSLVLEGSPALPYVVLSLTVTFLAFQQGAISPVTWLMLSEIFPLRLRGLGMGVTVFCLWMVNFAVSFTFPILLAAIGLSTTFFIFVGLGICSVLFVKRFLPETKGLSLEQLEENFRAYDHSGAKKDSGAEVIG.

The next 12 membrane-spanning stretches (helical) occupy residues 14 to 34, 49 to 69, 83 to 103, 111 to 131, 146 to 166, 172 to 192, 256 to 276, 295 to 315, 325 to 345, 350 to 370, 389 to 409, and 411 to 431; these read IILV…VLNG, AFTE…GAVF, ILFL…APNV, FVLG…LAEM, LMIV…GTTM, VWRF…FGMI, IVFI…NSIM, IGNI…IWLL, MTGL…SLVL, ALPY…QGAI, LGMG…SFTF, and ILLA…LGIC.

This sequence belongs to the major facilitator superfamily. Sugar transporter (TC 2.A.1.1) family.

The protein localises to the cell membrane. It functions in the pathway polyol metabolism; myo-inositol degradation into acetyl-CoA. Its function is as follows. Major myo-inositol uptake transporter. This Bacillus subtilis (strain 168) protein is Major myo-inositol transporter IolT (iolT).